We begin with the raw amino-acid sequence, 557 residues long: Aerobic glycerol-3-phosphate dehydrogenase (557 aa).

21–49 (DLVIIGGGITGAGIALDASERGMKVALVE) is a binding site for FAD.

It belongs to the FAD-dependent glycerol-3-phosphate dehydrogenase family. FAD is required as a cofactor.

Its subcellular location is the cytoplasm. The catalysed reaction is a quinone + sn-glycerol 3-phosphate = dihydroxyacetone phosphate + a quinol. It functions in the pathway polyol metabolism; glycerol degradation via glycerol kinase pathway; glycerone phosphate from sn-glycerol 3-phosphate (aerobic route): step 1/1. The polypeptide is Aerobic glycerol-3-phosphate dehydrogenase (glpD) (Staphylococcus aureus (strain bovine RF122 / ET3-1)).